The sequence spans 433 residues: Tyrosine--tRNA ligase (433 aa).

Tyr34 is a binding site for L-tyrosine. Positions 39 to 48 (PTASSLHVGS) match the 'HIGH' region motif. Residues Tyr169 and Gln173 each contribute to the L-tyrosine site. The 'KMSKS' region motif lies at 229–233 (KMGKT). Lys232 contacts ATP. Residues 364-432 (IPAFVLFHTV…RYHTIVVRKG (69 aa)) form the S4 RNA-binding domain.

This sequence belongs to the class-I aminoacyl-tRNA synthetase family. TyrS type 1 subfamily. In terms of assembly, homodimer.

The protein resides in the cytoplasm. It carries out the reaction tRNA(Tyr) + L-tyrosine + ATP = L-tyrosyl-tRNA(Tyr) + AMP + diphosphate + H(+). Functionally, catalyzes the attachment of tyrosine to tRNA(Tyr) in a two-step reaction: tyrosine is first activated by ATP to form Tyr-AMP and then transferred to the acceptor end of tRNA(Tyr). This is Tyrosine--tRNA ligase from Desulfosudis oleivorans (strain DSM 6200 / JCM 39069 / Hxd3) (Desulfococcus oleovorans).